The chain runs to 232 residues: Glycerol-3-phosphate acyltransferase 4 (232 aa).

6 helical membrane passes run 4–24 (VFLIMIPAGYLVGAIPMAYLL), 54–76 (LGLAVFVFDVSKGAIIILLAGWL), 80–99 (LWQQIVVGLLTIAGHNWPVF), 107–127 (GIATSLGVALVMAPVPALIAL), 143–163 (VFLGVGALPVMSGYFHGFFGV), and 168–188 (TVTWGFAGLFLIMIVRRLMAP).

It belongs to the PlsY family. In terms of assembly, probably interacts with PlsX.

It is found in the cell membrane. The enzyme catalyses an acyl phosphate + sn-glycerol 3-phosphate = a 1-acyl-sn-glycero-3-phosphate + phosphate. It participates in lipid metabolism; phospholipid metabolism. Its function is as follows. Catalyzes the transfer of an acyl group from acyl-phosphate (acyl-PO(4)) to glycerol-3-phosphate (G3P) to form lysophosphatidic acid (LPA). This enzyme utilizes acyl-phosphate as fatty acyl donor, but not acyl-CoA or acyl-ACP. In Dehalococcoides mccartyi (strain CBDB1), this protein is Glycerol-3-phosphate acyltransferase 4.